Consider the following 207-residue polypeptide: Ribosomal RNA large subunit methyltransferase E (207 aa).

S-adenosyl-L-methionine is bound by residues glycine 60, tryptophan 62, aspartate 80, aspartate 96, and aspartate 121. Lysine 161 functions as the Proton acceptor in the catalytic mechanism.

It belongs to the class I-like SAM-binding methyltransferase superfamily. RNA methyltransferase RlmE family.

It is found in the cytoplasm. It carries out the reaction uridine(2552) in 23S rRNA + S-adenosyl-L-methionine = 2'-O-methyluridine(2552) in 23S rRNA + S-adenosyl-L-homocysteine + H(+). Specifically methylates the uridine in position 2552 of 23S rRNA at the 2'-O position of the ribose in the fully assembled 50S ribosomal subunit. The polypeptide is Ribosomal RNA large subunit methyltransferase E (Ectopseudomonas mendocina (strain ymp) (Pseudomonas mendocina)).